Here is a 361-residue protein sequence, read N- to C-terminus: Polyribonucleotide 5'-hydroxyl-kinase PH0197 (361 aa).

43 to 50 is an ATP binding site; sequence GDVDTGKT.

The cofactor is a divalent metal cation.

The enzyme catalyses a 5'-end dephospho-2'-deoxyribonucleoside-DNA + ATP = a 5'-end 5'-phospho-2'-deoxyribonucleoside-DNA + ADP + H(+). The catalysed reaction is a 5'-end dephospho-ribonucleoside-RNA + ATP = a 5'-end 5'-phospho-ribonucleoside-RNA + ADP + H(+). DNA kinase activity is inhibited by 250 mM sodium chloride whereas RNA kinase activity is unaffected. Polynucleotide kinase that can phosphorylate the 5'-hydroxyl groups of both single-stranded RNA (ssRNA) and single-stranded DNA (ssDNA). Exhibits a strong preference for ssRNA. The protein is Polyribonucleotide 5'-hydroxyl-kinase PH0197 of Pyrococcus horikoshii (strain ATCC 700860 / DSM 12428 / JCM 9974 / NBRC 100139 / OT-3).